The following is a 481-amino-acid chain: tRNA:m(4)X modification enzyme TRM13 homolog (481 aa).

A2 carries the post-translational modification N-acetylalanine. Residues R56–E83 form a CHHC U11-48K-type zinc finger. 4 residues coordinate Zn(2+): C59, H65, H75, and C79. The stretch at S113–H140 forms a coiled coil. A disordered region spans residues E381–T408.

Belongs to the methyltransferase TRM13 family.

The catalysed reaction is cytidine(4) in tRNA(Pro) + S-adenosyl-L-methionine = 2'-O-methylcytidine(4) in tRNA(Pro) + S-adenosyl-L-homocysteine + H(+). The enzyme catalyses cytidine(4) in tRNA(Gly)(GCC) + S-adenosyl-L-methionine = 2'-O-methylcytidine(4) in tRNA(Gly)(GCC) + S-adenosyl-L-homocysteine + H(+). It catalyses the reaction adenosine(4) in tRNA(His) + S-adenosyl-L-methionine = 2'-O-methyladenosine(4) in tRNA(His) + S-adenosyl-L-homocysteine + H(+). In terms of biological role, tRNA methylase which 2'-O-methylates cytidine(4) in tRNA(Pro) and tRNA(Gly)(GCC), and adenosine(4) in tRNA(His). In Homo sapiens (Human), this protein is tRNA:m(4)X modification enzyme TRM13 homolog (TRMT13).